We begin with the raw amino-acid sequence, 213 residues long: Phycocyanobilin lyase subunit beta (213 aa).

The protein belongs to the CpcE/RpcE/PecE family. In terms of assembly, cpcE and CpcF associate to form a lyase.

Its function is as follows. Required for the chromophorylation of the CpcA gene product. The polypeptide is Phycocyanobilin lyase subunit beta (cpcF) (Thermosynechococcus vestitus (strain NIES-2133 / IAM M-273 / BP-1)).